A 255-amino-acid polypeptide reads, in one-letter code: Keratin-associated protein 10-2 (255 aa).

22 tandem repeats follow at residues 26-30, 36-40, 57-61, 79-83, 89-93, 99-103, 104-108, 109-113, 114-118, 120-124, 130-134, 145-149, 150-154, 162-166, 172-176, 182-186, 187-191, 192-196, 197-201, 209-213, 219-223, and 224-228. Residues 26–228 form a 22 X 5 AA repeats of C-C-X(3) region; it reads CCELPCGTPS…CCTSSCCRPS (203 aa).

It belongs to the KRTAP type 10 family. As to quaternary structure, interacts with hair keratins. Restricted to a narrow region of the hair fiber cuticle, lying approximately 20 cell layers above the apex of the dermal papilla of the hair root; not detected in any other tissues.

Its function is as follows. In the hair cortex, hair keratin intermediate filaments are embedded in an interfilamentous matrix, consisting of hair keratin-associated proteins (KRTAP), which are essential for the formation of a rigid and resistant hair shaft through their extensive disulfide bond cross-linking with abundant cysteine residues of hair keratins. The matrix proteins include the high-sulfur and high-glycine-tyrosine keratins. The protein is Keratin-associated protein 10-2 (KRTAP10-2) of Homo sapiens (Human).